The primary structure comprises 149 residues: Transcriptional repressor NrdR (149 aa).

A zinc finger spans residues 3-34; that stretch reads CPFCAMEETKVIDSRLVSDGYQVRRRRECGYC. The region spanning 49–139 is the ATP-cone domain; the sequence is PKIIKNDGSR…VYLSFDDINQ (91 aa).

Belongs to the NrdR family. Requires Zn(2+) as cofactor.

Its function is as follows. Negatively regulates transcription of bacterial ribonucleotide reductase nrd genes and operons by binding to NrdR-boxes. The sequence is that of Transcriptional repressor NrdR from Histophilus somni (strain 129Pt) (Haemophilus somnus).